Here is a 170-residue protein sequence, read N- to C-terminus: Large ribosomal subunit protein bL17 (170 aa).

A compositionally biased stretch (low complexity) spans 134-144; it reads ASAKAAQAQEK. Positions 134–170 are disordered; that stretch reads ASAKAAQAQEKPAQEEEVEATSDEVAYTSEPDKAAEH.

This sequence belongs to the bacterial ribosomal protein bL17 family. In terms of assembly, part of the 50S ribosomal subunit. Contacts protein L32.

This Mycobacterium leprae (strain Br4923) protein is Large ribosomal subunit protein bL17.